The primary structure comprises 841 residues: Translation initiation factor IF-2 (841 aa).

Positions 94–258 (QRSPEEIEAE…HGFQSPTGPV (165 aa)) are disordered. The span at 96–136 (SPEEIEAERKRELEERRAVENAARQKAEEEAKRRAEEEARR) shows a compositional bias: basic and acidic residues. A compositionally biased stretch (low complexity) spans 137 to 173 (QPAAAQPAGTEAVAAPVAPVEAVREAAPVAAAPAPAA). Basic and acidic residues-rich tracts occupy residues 174–194 (DARK…DNNR), 200–217 (DGER…EKAP), and 225–234 (TTDEESDGFR). A compositionally biased stretch (basic residues) spans 235-248 (RGGRGKAKLKKRNA). Residues 341-510 (SRAPVVTVMG…LLQAEVLELK (170 aa)) enclose the tr-type G domain. Residues 350–357 (GHVDHGKT) form a G1 region. A GTP-binding site is contributed by 350–357 (GHVDHGKT). Residues 375–379 (GITQH) are G2. The interval 396 to 399 (DTPG) is G3. GTP is bound by residues 396 to 400 (DTPGH) and 450 to 453 (NKID). Residues 450–453 (NKID) form a G4 region. The G5 stretch occupies residues 486 to 488 (SAK).

This sequence belongs to the TRAFAC class translation factor GTPase superfamily. Classic translation factor GTPase family. IF-2 subfamily.

It is found in the cytoplasm. In terms of biological role, one of the essential components for the initiation of protein synthesis. Protects formylmethionyl-tRNA from spontaneous hydrolysis and promotes its binding to the 30S ribosomal subunits. Also involved in the hydrolysis of GTP during the formation of the 70S ribosomal complex. This chain is Translation initiation factor IF-2, found in Pseudomonas fluorescens (strain SBW25).